Here is a 347-residue protein sequence, read N- to C-terminus: Fructose-1,6-bisphosphatase (347 aa).

AMP is bound by residues Ile19–Gln23 and Ser44–Ser48. Residues Asp85 and Glu114 each contribute to the Mg(2+) site. An AMP-binding site is contributed by Ser127–Tyr128. 3 residues coordinate Mg(2+): Asp133, Ile135, and Asp136. Position 136-139 (Asp136–Ser139) interacts with substrate. Lys155 is a binding site for AMP. Substrate is bound by residues Asn227–Tyr230, Arg258–Met263, Tyr279, and Lys288–Arg290. Residue Glu294 participates in Mg(2+) binding.

It belongs to the FBPase class 1 family. In terms of assembly, homotetramer. Requires Mg(2+) as cofactor.

The catalysed reaction is beta-D-fructose 1,6-bisphosphate + H2O = beta-D-fructose 6-phosphate + phosphate. Its pathway is carbohydrate biosynthesis; gluconeogenesis. With respect to regulation, subject to complex allosteric regulation. The enzyme can assume an active R-state, or an inactive T-state. Intermediate conformations may exist. AMP acts as allosteric inhibitor. AMP binding affects the turnover of bound substrate and not the affinity for substrate. This Schizosaccharomyces pombe (strain 972 / ATCC 24843) (Fission yeast) protein is Fructose-1,6-bisphosphatase (fbp1).